The following is a 246-amino-acid chain: Alpha-tubulin N-acetyltransferase (246 aa).

The 182-residue stretch at 21 to 202 (LTLVPDGVSR…NNFVVFHSFF (182 aa)) folds into the N-acetyltransferase domain. Acetyl-CoA contacts are provided by residues 135 to 148 (FYVD…GYGK) and 172 to 181 (SNKLLGFLRK).

This sequence belongs to the acetyltransferase ATAT1 family.

The enzyme catalyses L-lysyl-[alpha-tubulin] + acetyl-CoA = N(6)-acetyl-L-lysyl-[alpha-tubulin] + CoA + H(+). In terms of biological role, specifically acetylates 'Lys-40' in alpha-tubulin on the lumenal side of microtubules. Promotes microtubule destabilization and accelerates microtubule dynamics; this activity may be independent of acetylation activity. Acetylates alpha-tubulin with a slow enzymatic rate, due to a catalytic site that is not optimized for acetyl transfer. Enters the microtubule through each end and diffuses quickly throughout the lumen of microtubules. Acetylates only long/old microtubules because of its slow acetylation rate since it does not have time to act on dynamically unstable microtubules before the enzyme is released. In Leishmania major, this protein is Alpha-tubulin N-acetyltransferase.